The sequence spans 121 residues: MAKYRAGRINEEVKKEISSIIRMDLKDPRISAMVSVTKVDVTKDQRYAKVYVSIFGDEKSKEETLEALKSSSGFIRREVGHRIKLRYTPEIIIQNDDSIEHGMHIDSILDKIKENEDHDNK.

Belongs to the RbfA family. In terms of assembly, monomer. Binds 30S ribosomal subunits, but not 50S ribosomal subunits or 70S ribosomes.

The protein resides in the cytoplasm. Functionally, one of several proteins that assist in the late maturation steps of the functional core of the 30S ribosomal subunit. Associates with free 30S ribosomal subunits (but not with 30S subunits that are part of 70S ribosomes or polysomes). Required for efficient processing of 16S rRNA. May interact with the 5'-terminal helix region of 16S rRNA. In Clostridium tetani (strain Massachusetts / E88), this protein is Ribosome-binding factor A.